The sequence spans 469 residues: 3-isopropylmalate dehydratase large subunit (469 aa).

[4Fe-4S] cluster is bound by residues Cys349, Cys409, and Cys412.

This sequence belongs to the aconitase/IPM isomerase family. LeuC type 1 subfamily. In terms of assembly, heterodimer of LeuC and LeuD. Requires [4Fe-4S] cluster as cofactor.

It catalyses the reaction (2R,3S)-3-isopropylmalate = (2S)-2-isopropylmalate. It functions in the pathway amino-acid biosynthesis; L-leucine biosynthesis; L-leucine from 3-methyl-2-oxobutanoate: step 2/4. In terms of biological role, catalyzes the isomerization between 2-isopropylmalate and 3-isopropylmalate, via the formation of 2-isopropylmaleate. This Methylorubrum extorquens (strain CM4 / NCIMB 13688) (Methylobacterium extorquens) protein is 3-isopropylmalate dehydratase large subunit.